The following is a 259-amino-acid chain: MEVVILGGSRPIGKLAADAIEELLRRKPDAVLGLATGSSPLPVYEELAARHATGLDFSRASGFALDEYVGLPDGHPEQYRNVIRREFTDRINIEPANVHSPDGAATDIPAACDAYEAAIAAAGGVDLQLLGVGTDGHIGFNEPGSSFASRTRIKSLIEQTRKDNARFFTSLADVPHHVITQGLGTIMDARHVILIATGAQKAQAVRDFVEGPVAAICPASVLQFHPHATVLVDEAAASALKLADFYRHTYDNKPSWQGI.

The active-site Proton acceptor; for enolization step is the Asp-66. Asp-135 acts as the For ring-opening step in catalysis. His-137 (proton acceptor; for ring-opening step) is an active-site residue. Glu-142 (for ring-opening step) is an active-site residue.

This sequence belongs to the glucosamine/galactosamine-6-phosphate isomerase family. NagB subfamily.

It catalyses the reaction alpha-D-glucosamine 6-phosphate + H2O = beta-D-fructose 6-phosphate + NH4(+). Its pathway is amino-sugar metabolism; N-acetylneuraminate degradation; D-fructose 6-phosphate from N-acetylneuraminate: step 5/5. Its function is as follows. Catalyzes the reversible isomerization-deamination of glucosamine 6-phosphate (GlcN6P) to form fructose 6-phosphate (Fru6P) and ammonium ion. In Pseudarthrobacter chlorophenolicus (strain ATCC 700700 / DSM 12829 / CIP 107037 / JCM 12360 / KCTC 9906 / NCIMB 13794 / A6) (Arthrobacter chlorophenolicus), this protein is Glucosamine-6-phosphate deaminase.